A 303-amino-acid polypeptide reads, in one-letter code: N-acetyl-D-glucosamine kinase (303 aa).

Residues 4 to 11 and 133 to 140 each bind ATP; these read GFDIGGTK and GVGGGLIF. Residues histidine 157, cysteine 177, cysteine 179, and cysteine 184 each contribute to the Zn(2+) site.

This sequence belongs to the ROK (NagC/XylR) family. NagK subfamily.

The enzyme catalyses N-acetyl-D-glucosamine + ATP = N-acetyl-D-glucosamine 6-phosphate + ADP + H(+). Its pathway is cell wall biogenesis; peptidoglycan recycling. In terms of biological role, catalyzes the phosphorylation of N-acetyl-D-glucosamine (GlcNAc) derived from cell-wall degradation, yielding GlcNAc-6-P. This Escherichia fergusonii (strain ATCC 35469 / DSM 13698 / CCUG 18766 / IAM 14443 / JCM 21226 / LMG 7866 / NBRC 102419 / NCTC 12128 / CDC 0568-73) protein is N-acetyl-D-glucosamine kinase.